We begin with the raw amino-acid sequence, 431 residues long: Adenylosuccinate synthetase (431 aa).

GTP-binding positions include 12-18 (GDEGKGK) and 40-42 (GHT). Aspartate 13 functions as the Proton acceptor in the catalytic mechanism. Residues aspartate 13 and glycine 40 each coordinate Mg(2+). IMP-binding positions include 13-16 (DEGK), 38-41 (NAGH), threonine 129, arginine 143, glutamine 224, threonine 239, and arginine 303. Histidine 41 serves as the catalytic Proton donor. 299 to 305 (VTTGRAR) contacts substrate. Residues arginine 305, 331-333 (KLD), and 413-415 (GVG) contribute to the GTP site.

It belongs to the adenylosuccinate synthetase family. As to quaternary structure, homodimer. It depends on Mg(2+) as a cofactor.

Its subcellular location is the cytoplasm. It catalyses the reaction IMP + L-aspartate + GTP = N(6)-(1,2-dicarboxyethyl)-AMP + GDP + phosphate + 2 H(+). The protein operates within purine metabolism; AMP biosynthesis via de novo pathway; AMP from IMP: step 1/2. In terms of biological role, plays an important role in the de novo pathway of purine nucleotide biosynthesis. Catalyzes the first committed step in the biosynthesis of AMP from IMP. The polypeptide is Adenylosuccinate synthetase (Mycobacterium sp. (strain KMS)).